The primary structure comprises 132 residues: Small ribosomal subunit protein uS8 (132 aa).

It belongs to the universal ribosomal protein uS8 family. In terms of assembly, part of the 30S ribosomal subunit. Contacts proteins S5 and S12.

One of the primary rRNA binding proteins, it binds directly to 16S rRNA central domain where it helps coordinate assembly of the platform of the 30S subunit. The chain is Small ribosomal subunit protein uS8 from Rhodopseudomonas palustris (strain BisB18).